A 368-amino-acid chain; its full sequence is 3-dehydroquinate synthase (368 aa).

NAD(+) contacts are provided by residues 80-85 (DAESAK), 114-118 (GAATD), 138-139 (TT), Lys151, and Lys160. 3 residues coordinate Zn(2+): Glu193, His255, and His271.

It belongs to the sugar phosphate cyclases superfamily. Dehydroquinate synthase family. It depends on Co(2+) as a cofactor. Zn(2+) serves as cofactor. The cofactor is NAD(+).

It is found in the cytoplasm. The catalysed reaction is 7-phospho-2-dehydro-3-deoxy-D-arabino-heptonate = 3-dehydroquinate + phosphate. Its pathway is metabolic intermediate biosynthesis; chorismate biosynthesis; chorismate from D-erythrose 4-phosphate and phosphoenolpyruvate: step 2/7. Its function is as follows. Catalyzes the conversion of 3-deoxy-D-arabino-heptulosonate 7-phosphate (DAHP) to dehydroquinate (DHQ). The sequence is that of 3-dehydroquinate synthase from Corynebacterium jeikeium (strain K411).